An 870-amino-acid polypeptide reads, in one-letter code: Eukaryotic translation initiation factor 3 subunit C (870 aa).

Positions 1-92 (MSRFFRGDSS…GVKVVKSAKN (92 aa)) are disordered. A compositionally biased stretch (acidic residues) spans 14–54 (SSDEEEDLYSDDEEVQEQPEEESEEDDSEEDDDDDDSDSSS). The PCI domain occupies 608–782 (FHMHINLELL…SSIIFRKGVE (175 aa)). The disordered stretch occupies residues 807-870 (TLETRTQGTA…ALGAAVGSRA (64 aa)). Residues 824 to 844 (GRGGRGGNRGGRGGNRGGRGG) show a composition bias toward gly residues.

It belongs to the eIF-3 subunit C family. Component of the eukaryotic translation initiation factor 3 (eIF-3) complex.

The protein resides in the cytoplasm. Component of the eukaryotic translation initiation factor 3 (eIF-3) complex, which is involved in protein synthesis of a specialized repertoire of mRNAs and, together with other initiation factors, stimulates binding of mRNA and methionyl-tRNAi to the 40S ribosome. The eIF-3 complex specifically targets and initiates translation of a subset of mRNAs involved in cell proliferation. In Sclerotinia sclerotiorum (strain ATCC 18683 / 1980 / Ss-1) (White mold), this protein is Eukaryotic translation initiation factor 3 subunit C (nip1).